We begin with the raw amino-acid sequence, 631 residues long: tRNA uridine 5-carboxymethylaminomethyl modification enzyme MnmG (631 aa).

FAD contacts are provided by residues 15 to 20, isoleucine 127, and serine 182; that span reads GAGHAG. 276-290 contacts NAD(+); that stretch reads GPRYCPSIEDKIVRF. Glutamine 373 is an FAD binding site.

It belongs to the MnmG family. Homodimer. Heterotetramer of two MnmE and two MnmG subunits. FAD serves as cofactor.

It localises to the cytoplasm. Functionally, NAD-binding protein involved in the addition of a carboxymethylaminomethyl (cmnm) group at the wobble position (U34) of certain tRNAs, forming tRNA-cmnm(5)s(2)U34. This Streptococcus mutans serotype c (strain ATCC 700610 / UA159) protein is tRNA uridine 5-carboxymethylaminomethyl modification enzyme MnmG.